The following is a 205-amino-acid chain: H/ACA ribonucleoprotein complex subunit GAR1 (205 aa).

The segment covering 1–23 (MSFRGGNRGGRGGFRGGFRGGRT) has biased composition (gly residues). The disordered stretch occupies residues 1–31 (MSFRGGNRGGRGGFRGGFRGGRTGSARSFQQ). At Arg-4 the chain carries Asymmetric dimethylarginine; by HMT1. An RGG-box 1 region spans residues 4-21 (RGGNRGGRGGFRGGFRGG). Arg-8 bears the Asymmetric dimethylarginine; by HMT1; alternate mark. Omega-N-methylarginine; by HMT1; alternate is present on Arg-8. Arg-11 is subject to Asymmetric dimethylarginine; by HMT1. The residue at position 15 (Arg-15) is an Asymmetric dimethylarginine; by HMT1; alternate. Omega-N-methylarginine; by HMT1; alternate is present on Arg-15. At Arg-19 the chain carries Asymmetric dimethylarginine; by HMT1. A Glycyl lysine isopeptide (Lys-Gly) (interchain with G-Cter in ubiquitin) cross-link involves residue Lys-77. Positions 124–205 (PKPKVVGPPK…SRGGFRGGRR (82 aa)) are disordered. Residues 143 to 205 (APGGRGGASM…SRGGFRGGRR (63 aa)) are compositionally biased toward gly residues. Asymmetric dimethylarginine; by HMT1; alternate is present on residues Arg-147, Arg-154, and Arg-158. Residues Arg-147, Arg-154, and Arg-158 each carry the omega-N-methylarginine; by HMT1; alternate modification. Positions 147-205 (RGGASMGRGGSRGGFRGGRGGSSFRGGRGGSSFRGGSRGGSFRGGSRGGSRGGFRGGRR) are RGG-box 2. Residue Arg-162 is modified to Asymmetric dimethylarginine; by HMT1. Asymmetric dimethylarginine; by HMT1; alternate is present on Arg-165. An Omega-N-methylarginine; by HMT1; alternate modification is found at Arg-165. Arg-171 and Arg-174 each carry asymmetric dimethylarginine; by HMT1. Arg-180 and Arg-184 each carry omega-N-methylarginine; by HMT1. Arg-189 bears the Asymmetric dimethylarginine; by HMT1; alternate mark. Position 189 is an omega-N-methylarginine; by HMT1; alternate (Arg-189). Asymmetric dimethylarginine; by HMT1 occurs at positions 193, 197, and 201.

The protein belongs to the GAR1 family. In terms of assembly, component of the small nucleolar ribonucleoprotein particles containing H/ACA-type snoRNAs (H/ACA snoRNPs). The protein component of the H/ACA snoRNP contains CBF5, GAR1, NHP2 and NOP10. The complex contains a stable core composed of CBF5 and NOP10, to which GAR1 and NHP2 subsequently bind. Interacts with snoRNAs. Methylated by HMT1, forming asymmetric dimethylarginines (DMA) within a domain referred to as an RGG box, made up of repeated Gly-Gly dipeptides interspersed with Arg and aromatic residues.

It localises to the nucleus. The protein resides in the nucleolus. Non-catalytic component of the H/ACA small nucleolar ribonucleoprotein (H/ACA snoRNP), which catalyzes pseudouridylation of rRNA and is required for ribosome biogenesis. This involves the isomerization of uridine such that the ribose is subsequently attached to C5, instead of the normal N1. Pseudouridine ('psi') residues may serve to stabilize the conformation of rRNAs. The H/ACA snoRNP complex also mediates pseudouridylation of other types of RNAs. The H/ACA snoRNP complex mediates pseudouridylation at position 93 in U2 snRNA. Essential for growth. The sequence is that of H/ACA ribonucleoprotein complex subunit GAR1 from Saccharomyces cerevisiae (strain ATCC 204508 / S288c) (Baker's yeast).